The sequence spans 316 residues: Adenine deaminase (316 aa).

The Zn(2+) site is built by His14, His16, and His194. The Proton donor role is filled by Glu197. Asp275 serves as a coordination point for Zn(2+). Residue Asp276 participates in substrate binding.

Belongs to the metallo-dependent hydrolases superfamily. Adenosine and AMP deaminases family. Adenine deaminase type 2 subfamily. Zn(2+) is required as a cofactor.

The catalysed reaction is adenine + H2O + H(+) = hypoxanthine + NH4(+). Functionally, catalyzes the hydrolytic deamination of adenine to hypoxanthine. Plays an important role in the purine salvage pathway and in nitrogen catabolism. This chain is Adenine deaminase, found in Pseudomonas aeruginosa (strain LESB58).